The sequence spans 228 residues: Adapter protein MecA (228 aa).

The segment at 79 to 98 is disordered; the sequence is GQKNDDSAADQTDDEGTDTQ. Over residues 85 to 95 the composition is skewed to acidic residues; it reads SAADQTDDEGT.

The protein belongs to the MecA family. As to quaternary structure, homodimer.

Functionally, enables the recognition and targeting of unfolded and aggregated proteins to the ClpC protease or to other proteins involved in proteolysis. The chain is Adapter protein MecA from Lacticaseibacillus casei (strain BL23) (Lactobacillus casei).